Reading from the N-terminus, the 282-residue chain is 4-hydroxybenzoate octaprenyltransferase (282 aa).

The next 9 membrane-spanning stretches (helical) occupy residues 17–37 (IGIL…NQGF), 40–60 (IDLL…GCVI), 90–110 (AFIL…KLPI), 113–133 (FYFA…KRFL), 135–155 (APQL…FIAS), 163–183 (FIVL…MYAM), 207–227 (LIIA…AINK), 231–251 (WFFY…LKLI), and 262–282 (AFLV…LALI).

Belongs to the UbiA prenyltransferase family. The cofactor is Mg(2+).

The protein resides in the cell inner membrane. It catalyses the reaction all-trans-octaprenyl diphosphate + 4-hydroxybenzoate = 4-hydroxy-3-(all-trans-octaprenyl)benzoate + diphosphate. The protein operates within cofactor biosynthesis; ubiquinone biosynthesis. Catalyzes the prenylation of para-hydroxybenzoate (PHB) with an all-trans polyprenyl group. Mediates the second step in the final reaction sequence of ubiquinone-8 (UQ-8) biosynthesis, which is the condensation of the polyisoprenoid side chain with PHB, generating the first membrane-bound Q intermediate 3-octaprenyl-4-hydroxybenzoate. The polypeptide is 4-hydroxybenzoate octaprenyltransferase (Legionella pneumophila subsp. pneumophila (strain Philadelphia 1 / ATCC 33152 / DSM 7513)).